The sequence spans 778 residues: Ral guanine nucleotide dissociation stimulator-like 2 (778 aa).

Low complexity predominate over residues 1-15 (MLPRPLRLLLDTTPP). The segment at 1–59 (MLPRPLRLLLDTTPPGGVVLSSFRSRDPEEGGDPGGRAVGGGQEEEDEEEEEASVSVWD) is disordered. Residues 33 to 42 (DPGGRAVGGG) show a composition bias toward gly residues. The segment covering 43–59 (QEEEDEEEEEASVSVWD) has biased composition (acidic residues). The 125-residue stretch at 88 to 212 (SSRRLRAGTL…GSADLIRNLR (125 aa)) folds into the N-terminal Ras-GEF domain. In terms of domain architecture, Ras-GEF spans 243–513 (LADHLAEQLT…HRVSCEVEPP (271 aa)). Disordered stretches follow at residues 503–524 (SHRV…ARTP), 541–564 (GGPT…GTPA), 581–647 (SLDS…GPGS), and 735–769 (RRPS…IKAT). Residues 581-592 (SLDSALESSPSL) show a composition bias toward low complexity. Residues 620–632 (CGSPLSGNTGEGT) are compositionally biased toward polar residues. In terms of domain architecture, Ras-associating spans 649–736 (DCRIIRVQME…HDFLLRQRRR (88 aa)). The span at 738 to 756 (SAATPGSHSGPSASGTPPS) shows a compositional bias: low complexity.

As to quaternary structure, interacts with SAMD9.

Probable guanine nucleotide exchange factor. Putative effector of Ras and/or Rap. Associates with the GTP-bound form of Rap 1A and H-Ras in vitro. In Mus musculus (Mouse), this protein is Ral guanine nucleotide dissociation stimulator-like 2 (Rgl2).